We begin with the raw amino-acid sequence, 1073 residues long: Serine/threonine-protein phosphatase 6 regulatory ankyrin repeat subunit C (1073 aa).

28 ANK repeats span residues Thr7–Val36, Glu40–Ala69, Val73–Ala102, Tyr106–Val135, Thr139–Thr168, Lys172–Cys201, Lys205–Glu234, Phe238–Gln267, Lys271–Phe301, Glu305–Cys334, Tyr338–Arg367, His371–Ile400, Leu422–Arg451, Phe455–Glu484, Lys488–Leu544, Gln548–Asp578, Ile583–Val612, Lys616–Val645, Arg650–Ile679, His686–Ala715, Arg719–Cys748, Lys752–Pro781, Ser789–Leu818, Asn821–Asn851, Lys856–Thr885, Leu889–Val919, Asn923–Leu952, and Ala959–Ala988.

Protein phosphatase 6 (PP6) holoenzyme is proposed to be a heterotrimeric complex formed by the catalytic subunit, a SAPS domain-containing subunit (PP6R) and an ankyrin repeat-domain containing regulatory subunit (ARS).

Putative regulatory subunit of protein phosphatase 6 (PP6) that may be involved in the recognition of phosphoprotein substrates. In Gallus gallus (Chicken), this protein is Serine/threonine-protein phosphatase 6 regulatory ankyrin repeat subunit C (ANKRD52).